Consider the following 115-residue polypeptide: Dolichyl-diphosphooligosaccharide--protein glycosyltransferase subunit DAD2 (115 aa).

Over 1-31 the chain is Cytoplasmic; that stretch reads MVKSTSKDAQDLFHSLHSAYTATPTNLKIID. Residues 32-52 form a helical membrane-spanning segment; that stretch reads LYVCFAVFTALIQVAYMALVG. The Lumenal portion of the chain corresponds to 53 to 55; sequence SFP. The chain crosses the membrane as a helical span at residues 56–76; the sequence is FNSFLSGVLSCIGTAVLAVCL. Residues 77–94 are Cytoplasmic-facing; the sequence is RIQVNKENKEFKDLAPER. Residues 95 to 115 traverse the membrane as a helical segment; it reads AFADFVLCNLVLHLVIINFLG.

Belongs to the DAD/OST2 family. As to quaternary structure, component of the oligosaccharyltransferase (OST) complex.

Its subcellular location is the endoplasmic reticulum membrane. Its pathway is protein modification; protein glycosylation. Its function is as follows. Subunit of the oligosaccharyl transferase (OST) complex that catalyzes the initial transfer of a defined glycan (Glc(3)Man(9)GlcNAc(2) in eukaryotes) from the lipid carrier dolichol-pyrophosphate to an asparagine residue within an Asn-X-Ser/Thr consensus motif in nascent polypeptide chains, the first step in protein N-glycosylation. N-glycosylation occurs cotranslationally and the complex associates with the Sec61 complex at the channel-forming translocon complex that mediates protein translocation across the endoplasmic reticulum (ER). All subunits are required for a maximal enzyme activity. The sequence is that of Dolichyl-diphosphooligosaccharide--protein glycosyltransferase subunit DAD2 (DAD2) from Arabidopsis thaliana (Mouse-ear cress).